The following is a 417-amino-acid chain: Echinulin prenyltransferase 1 (417 aa).

The dimethylallyl diphosphate site is built by R90, K179, Y181, K248, Y250, Y333, Y398, and Y402.

The protein belongs to the tryptophan dimethylallyltransferase family.

It carries out the reaction cyclo(L-tryptophyl-L-alanyl) + dimethylallyl diphosphate = preechinulin + diphosphate. Its pathway is secondary metabolite biosynthesis. The protein operates within alkaloid biosynthesis. In terms of biological role, prenyltransferase; part of the gene cluster that mediates the biosynthesis of echinulin family alkaloid. The pathway begins with the biosynthesis of the cyclic dipeptide cyclo-L-Trp-L-Ala (cyclo-TA) by the NRPS echPS via condensation of L-alanine and L-tryptophan. The prenyltransferase echPT1 then catalyzes the first prenylation step, a reverse prenylation reaction at C2, to yield preechinulin. Preechinulin is the substrate of the cytochrome P450 monooxygenase echP450 that catalyzes the formation of the double bond between C10 and C11 to produce neoechulin A. The unique prenyltransferase echPT2 functions as a competitive enzyme with echP450 for preechinulin metabolization and uses preechinulin for effective regiospecific prenylations. Preechinulin is prenylated by echPT2 at C5 or C7. C7-prenylation leads to accumulation of tardioxopiperazine B without further modification by echPT2. In contrast, the C5-prenylated tardioxopiperazine A can be prenylated again by echPT2, predominantly at C7 to form echinulin or less frequently at C4 to give variecolorin L. EchPT2 also accepts neoechilunin A to produce varlecolorin G (prenylation at C5) or isoechinulin A (prenylation at C7). EchPT2 further converts isoechinulin A into dehydroechinulin. Moreover, a yet unidentified enzyme can also convert neoechilunin A into neoechilunin B by introducing a double bond between positions C14 and C17 and thus provides a further substrate to echPT2 for C5 and C7 prenylation. The protein is Echinulin prenyltransferase 1 of Aspergillus ruber (Eurotium rubrum).